Reading from the N-terminus, the 602-residue chain is NADH-quinone oxidoreductase subunit C/D (602 aa).

The interval 1–192 (MVNNMTDLTA…DPFELTKAKQ (192 aa)) is NADH dehydrogenase I subunit C. An NADH dehydrogenase I subunit D region spans residues 216-602 (DFMFLNLGPN…IDFVMSDVDR (387 aa)).

The protein in the N-terminal section; belongs to the complex I 30 kDa subunit family. This sequence in the C-terminal section; belongs to the complex I 49 kDa subunit family. In terms of assembly, NDH-1 is composed of 13 different subunits. Subunits NuoB, CD, E, F, and G constitute the peripheral sector of the complex.

It is found in the cell inner membrane. The enzyme catalyses a quinone + NADH + 5 H(+)(in) = a quinol + NAD(+) + 4 H(+)(out). NDH-1 shuttles electrons from NADH, via FMN and iron-sulfur (Fe-S) centers, to quinones in the respiratory chain. The immediate electron acceptor for the enzyme in this species is believed to be ubiquinone. Couples the redox reaction to proton translocation (for every two electrons transferred, four hydrogen ions are translocated across the cytoplasmic membrane), and thus conserves the redox energy in a proton gradient. In Klebsiella pneumoniae (strain 342), this protein is NADH-quinone oxidoreductase subunit C/D.